The sequence spans 217 residues: CLA biosynthesis enone reductase (217 aa).

Arg20, Ser22, and Arg24 together coordinate FMN. Cys51 is a 10-oxooctadecanoate binding site. FMN is bound by residues Asn78 and Gln81. Residue Arg118 participates in 10-oxooctadecanoate binding. FMN-binding residues include Asn165, Ser168, Gly169, and Arg206.

The protein belongs to the nitroreductase family. Homodimer. The cofactor is FMN.

The enzyme catalyses 10-oxo-(11E)-octadecenoate + NADH + H(+) = 10-oxooctadecanoate + NAD(+). It participates in lipid metabolism; fatty acid metabolism. Functionally, is involved in a saturation metabolic pathway of polyunsaturated fatty acids, that detoxifies unsaturated fatty acids and generates hydroxy fatty acids, oxo fatty acids, conjugated fatty acids such as conjugated linoleic acids (CLAs), and partially saturated trans-fatty acids as intermediates. CLA-ER catalyzes the saturation of the carbon-carbon double bond in 10-oxo-(11E)-octadecenoate to produce 10-oxooctadecanoate, during linoleate metabolism. As part of the gut microbiome, this enzyme modifies host fatty acid composition and is expected to improve human health by altering lipid metabolism related to the onset of metabolic syndrome. The polypeptide is CLA biosynthesis enone reductase (Lactiplantibacillus plantarum (Lactobacillus plantarum)).